Reading from the N-terminus, the 103-residue chain is uncharacterized protein (103 aa).

Positions 1–13 (MLLSSIVSFVADA) are cleaved as a signal peptide. A glycan (N-linked (GlcNAc...) asparagine) is linked at N67. Residues 73-103 (LSSDSNRNIIDNSNNNQHPSSSSTSTSWKKF) form a disordered region.

The protein resides in the secreted. This is an uncharacterized protein from Dictyostelium discoideum (Social amoeba).